The sequence spans 630 residues: Transcription factor MYC1 (630 aa).

Disordered regions lie at residues 356-398 (FGDS…NNEE) and 430-463 (VKEA…EAER). Positions 440–449 (KPRKRGRKPA) are enriched in basic residues. The segment covering 450–463 (NGREEPLNHVEAER) has biased composition (basic and acidic residues). Residues 453–466 (EEPLNHVEAERQRR) form a basic motif; degenerate region. The bHLH domain maps to 453–502 (EEPLNHVEAERQRREKLNQRFYALRAVVPNVSKMDKASLLGDAIAYINEL). The helix-loop-helix motif stretch occupies residues 467 to 502 (EKLNQRFYALRAVVPNVSKMDKASLLGDAIAYINEL).

As to expression, highly expressed in trichomes and at lower levels in leaves and flowers. Expressed at low levels in roots, stems, leaves, flowers and fruits.

The protein resides in the nucleus. In terms of biological role, transcriptional activator that binds to the G-box motif (5'-AACGTG-3') found in a number of promoters of jasmonate-induced genes. Transcription activator involved in the transcriptional regulation of terpene biosynthesis in glandular trichomes. Binds to the promoter of the linalool synthase TPS5 and promotes TPS5 gene transactivation. Acts synergistically with EOT1 in the transactivation of TPS5. Involved in type VI glandular trichome development. Involved in the activation of terpene synthases required for volatile mono- and sesquiterpenes synthesis by the glandular cells of type VI trichomes. In Solanum lycopersicum (Tomato), this protein is Transcription factor MYC1.